The chain runs to 130 residues: Large-conductance mechanosensitive channel (130 aa).

The next 2 membrane-spanning stretches (helical) occupy residues 14–34 (IIDL…VTSF) and 73–93 (FVDF…LVKF).

It belongs to the MscL family. As to quaternary structure, homopentamer.

Its subcellular location is the cell membrane. Functionally, channel that opens in response to stretch forces in the membrane lipid bilayer. May participate in the regulation of osmotic pressure changes within the cell. The sequence is that of Large-conductance mechanosensitive channel from Oceanobacillus iheyensis (strain DSM 14371 / CIP 107618 / JCM 11309 / KCTC 3954 / HTE831).